The chain runs to 960 residues: Serine/threonine-protein kinase atg1 (960 aa).

The Protein kinase domain maps to 22–327 (YTRLDEIGRG…FPEFFSNNVI (306 aa)). ATP-binding positions include 28 to 36 (IGRGSFATV) and Lys-51. Asp-165 acts as the Proton acceptor in catalysis. Disordered stretches follow at residues 333-467 (GLLA…RAQE), 503-538 (PRLQ…PHAN), 550-571 (ARAD…QSPT), 673-694 (SAST…SADS), 789-815 (RLPP…TADV), and 926-960 (AKRS…TPPR). 2 stretches are compositionally biased toward polar residues: residues 376–388 (PVTT…TPPT) and 520–536 (RRTT…SSPH). Residues 550-566 (ARADSTHQRQHSYERRY) are compositionally biased toward basic and acidic residues. The span at 789–800 (RLPPDHPSHPDN) shows a compositional bias: basic and acidic residues. Low complexity predominate over residues 801–815 (HSISSTAGSSSTADV). Residues 930–951 (SAPTPTAGSAGKTPTSNISPVT) are compositionally biased toward polar residues.

Belongs to the protein kinase superfamily. Ser/Thr protein kinase family. APG1/unc-51/ULK1 subfamily. Homodimer. Forms a ternary complex with ATG13 and ATG17.

Its subcellular location is the cytoplasm. The protein resides in the preautophagosomal structure membrane. The catalysed reaction is L-seryl-[protein] + ATP = O-phospho-L-seryl-[protein] + ADP + H(+). It catalyses the reaction L-threonyl-[protein] + ATP = O-phospho-L-threonyl-[protein] + ADP + H(+). Functionally, serine/threonine protein kinase involved in the cytoplasm to vacuole transport (Cvt) and found to be essential in autophagy, where it is required for the formation of autophagosomes. Involved in the clearance of protein aggregates which cannot be efficiently cleared by the proteasome. Required for selective autophagic degradation of the nucleus (nucleophagy) as well as for mitophagy which contributes to regulate mitochondrial quantity and quality by eliminating the mitochondria to a basal level to fulfill cellular energy requirements and preventing excess ROS production. Also involved in endoplasmic reticulum-specific autophagic process, in selective removal of ER-associated degradation (ERAD) substrates. Plays a key role in ATG9 and ATG23 cycling through the pre-autophagosomal structure and is necessary to promote ATG18 binding to ATG9 through phosphorylation of ATG9. Catalyzes phosphorylation of ATG4, decreasing the interaction between ATG4 and ATG8 and impairing deconjugation of PE-conjugated forms of ATG8. In Penicillium rubens (strain ATCC 28089 / DSM 1075 / NRRL 1951 / Wisconsin 54-1255) (Penicillium chrysogenum), this protein is Serine/threonine-protein kinase atg1.